Reading from the N-terminus, the 292-residue chain is MTRIVLFLLTNLAVMLIFSLILFLTGIQSNTIYGLLIMSGLFGFSGSILSLILSKWIALRSVNGEIITHPRNEVESWLINTVRQQSIQKGIIMPQIAVYHATDINAFATGARRNSALIAVSTGLLENMTHHEAEAVIAHEISHIANGDMITMTLVQGVVNTFVIFISRFLSQIISNVMSSNRNENNTEEKNSFVYFLVSTFLELIFGILASIITMWFSRHREFYADASSAKMVGREKMIAALNRLKTSHEPQESDSMIAFCINGKSKSFLKLFASHPSLENRIEALYNQEYM.

Transmembrane regions (helical) follow at residues 4-24 (IVLF…ILFL) and 32-52 (IYGL…LSLI). Histidine 139 serves as a coordination point for Zn(2+). Glutamate 140 is a catalytic residue. Histidine 143 is a Zn(2+) binding site. The next 2 helical transmembrane spans lie at 147-167 (GDMI…IFIS) and 193-213 (FVYF…ASII). Zn(2+) is bound at residue glutamate 222.

It belongs to the peptidase M48B family. Zn(2+) is required as a cofactor.

It localises to the cell membrane. The protein is Protease HtpX of Buchnera aphidicola subsp. Acyrthosiphon pisum (strain 5A).